A 167-amino-acid polypeptide reads, in one-letter code: Endoribonuclease YbeY (167 aa).

3 residues coordinate Zn(2+): His-131, His-135, and His-141.

The protein belongs to the endoribonuclease YbeY family. Requires Zn(2+) as cofactor.

It is found in the cytoplasm. Single strand-specific metallo-endoribonuclease involved in late-stage 70S ribosome quality control and in maturation of the 3' terminus of the 16S rRNA. This is Endoribonuclease YbeY from Rickettsia rickettsii (strain Sheila Smith).